The primary structure comprises 267 residues: Octanoyltransferase (267 aa).

The BPL/LPL catalytic domain maps to 77-265; it reads GTASELVWLV…AFESVFGPRQ (189 aa). Residues 116 to 123, 196 to 198, and 209 to 211 contribute to the substrate site; these read RGGEYTYH, AIG, and GIA. Cys-227 functions as the Acyl-thioester intermediate in the catalytic mechanism.

This sequence belongs to the LipB family.

It localises to the cytoplasm. The enzyme catalyses octanoyl-[ACP] + L-lysyl-[protein] = N(6)-octanoyl-L-lysyl-[protein] + holo-[ACP] + H(+). The protein operates within protein modification; protein lipoylation via endogenous pathway; protein N(6)-(lipoyl)lysine from octanoyl-[acyl-carrier-protein]: step 1/2. Functionally, catalyzes the transfer of endogenously produced octanoic acid from octanoyl-acyl-carrier-protein onto the lipoyl domains of lipoate-dependent enzymes. Lipoyl-ACP can also act as a substrate although octanoyl-ACP is likely to be the physiological substrate. The protein is Octanoyltransferase of Brucella suis biovar 1 (strain 1330).